The chain runs to 327 residues: Glycerol-3-phosphate dehydrogenase [NAD(P)+] (327 aa).

The NADPH site is built by Phe14, Arg35, and Lys108. The sn-glycerol 3-phosphate site is built by Lys108 and Gly136. An NADPH-binding site is contributed by Ala140. 5 residues coordinate sn-glycerol 3-phosphate: Lys191, Asp244, Ser254, Arg255, and Asn256. Lys191 (proton acceptor) is an active-site residue. Arg255 is an NADPH binding site. Leu275 and Glu277 together coordinate NADPH.

It belongs to the NAD-dependent glycerol-3-phosphate dehydrogenase family.

It localises to the cytoplasm. It carries out the reaction sn-glycerol 3-phosphate + NAD(+) = dihydroxyacetone phosphate + NADH + H(+). It catalyses the reaction sn-glycerol 3-phosphate + NADP(+) = dihydroxyacetone phosphate + NADPH + H(+). It functions in the pathway membrane lipid metabolism; glycerophospholipid metabolism. Its function is as follows. Catalyzes the reduction of the glycolytic intermediate dihydroxyacetone phosphate (DHAP) to sn-glycerol 3-phosphate (G3P), the key precursor for phospholipid synthesis. The polypeptide is Glycerol-3-phosphate dehydrogenase [NAD(P)+] (Agrobacterium fabrum (strain C58 / ATCC 33970) (Agrobacterium tumefaciens (strain C58))).